The chain runs to 88 residues: Protein E7 (88 aa).

Residues 1 to 37 form an E7 terminal domain region; that stretch reads MVGEQPNIGDLVSQEEPSVLDLNCYEDIPAEEEESEY. Residues 22–26 carry the LXCXE motif; interaction with host RB1 and TMEM173/STING motif; sequence LNCYE. The segment at 45–81 is a zinc-finger region; that stretch reads CGLCDQLLRLTCVSDLSTLTRLEELLLGSLRIVCPLC. A Nuclear export signal motif is present at residues 63-71; sequence LTRLEELLL.

The protein belongs to the papillomaviridae E7 protein family. As to quaternary structure, homodimer. Homooligomer. Interacts with host RB1; this interaction induces dissociation of RB1-E2F1 complex thereby disrupting RB1 activity. Interacts with host EP300; this interaction represses EP300 transcriptional activity. Interacts with protein E2; this interaction inhibits E7 oncogenic activity. Interacts with host TMEM173/STING; this interaction impairs the ability of TMEM173/STING to sense cytosolic DNA and promote the production of type I interferon (IFN-alpha and IFN-beta). Highly phosphorylated.

It is found in the host cytoplasm. The protein resides in the host nucleus. In terms of biological role, plays a role in viral genome replication by driving entry of quiescent cells into the cell cycle. Stimulation of progression from G1 to S phase allows the virus to efficiently use the cellular DNA replicating machinery to achieve viral genome replication. E7 protein has both transforming and trans-activating activities. Induces the disassembly of the E2F1 transcription factor from RB1, with subsequent transcriptional activation of E2F1-regulated S-phase genes. Interferes with host histone deacetylation mediated by HDAC1 and HDAC2, leading to transcription activation. Also plays a role in the inhibition of both antiviral and antiproliferative functions of host interferon alpha. Interaction with host TMEM173/STING impairs the ability of TMEM173/STING to sense cytosolic DNA and promote the production of type I interferon (IFN-alpha and IFN-beta). The chain is Protein E7 from Human papillomavirus type 63.